The sequence spans 403 residues: Cysteine desulfurase IscS (403 aa).

Pyridoxal 5'-phosphate contacts are provided by residues 73-74 (AT), Asn-153, Gln-181, and 201-203 (SAH). Lys-204 is subject to N6-(pyridoxal phosphate)lysine. Thr-241 provides a ligand contact to pyridoxal 5'-phosphate. The active-site Cysteine persulfide intermediate is Cys-326. Cys-326 contacts [2Fe-2S] cluster.

Belongs to the class-V pyridoxal-phosphate-dependent aminotransferase family. NifS/IscS subfamily. Homodimer. Forms a heterotetramer with IscU, interacts with other sulfur acceptors. It depends on pyridoxal 5'-phosphate as a cofactor.

It localises to the cytoplasm. The catalysed reaction is (sulfur carrier)-H + L-cysteine = (sulfur carrier)-SH + L-alanine. The protein operates within cofactor biosynthesis; iron-sulfur cluster biosynthesis. Master enzyme that delivers sulfur to a number of partners involved in Fe-S cluster assembly, tRNA modification or cofactor biosynthesis. Catalyzes the removal of elemental sulfur atoms from cysteine to produce alanine. Functions as a sulfur delivery protein for Fe-S cluster synthesis onto IscU, an Fe-S scaffold assembly protein, as well as other S acceptor proteins. The polypeptide is Cysteine desulfurase IscS (Methylococcus capsulatus (strain ATCC 33009 / NCIMB 11132 / Bath)).